We begin with the raw amino-acid sequence, 566 residues long: MGSLGMYSESAVRKKSSRGYDVPEGVDIRGRYDEEFARILNKEALLFVADLQRTFRNHIRYSMECRREAKRRYNEGAVPGFDPATKYIRESEWTCASVPPAVADRRVEITGPVERKMIINALNSGAKVFMADFEDALSPNWENLMRGQINLKDAVDGTISFHDKARNKVYKLNDQTAKLFVRPRGWHFAEAHIFIDGEPATGCLVDFGLYFFHNHANFRRSQGQGSGPFFYLPKMEHSREAKIWNSVFERAEKMAGIERGSIRATVLIETLPAVFQMDEILYELRDHSVGLNCGRWDYIFSYVKTFQAHLDRLLPDRVQVGMAQHFMRSYSDLLIRTCHTVVCHVGGMAAQIPIRDDPKANEMALELVRKDKLREAKAGHDGTWAAHPGLIPACMEVFTNSMGNAPNQIRSARRDDAANLTEDDLLQQPRGVRTLEGLRLNTRVGIQYLAAWLTGTGSVPLYNLMEDAATAEISRVQNWQWLKYGVELDGDGLGVRVNKELFARVVEEEMERIEREVGKEKFRKGMYKEACKMFTRQCTAPTLDDFLTLDAYNHIVIHHPRELSRL.

R182 serves as the catalytic Proton acceptor. D467 functions as the Proton donor in the catalytic mechanism. The Microbody targeting signal motif lies at 564–566 (SRL).

The protein belongs to the malate synthase family.

It localises to the glyoxysome. The catalysed reaction is glyoxylate + acetyl-CoA + H2O = (S)-malate + CoA + H(+). It functions in the pathway carbohydrate metabolism; glyoxylate cycle; (S)-malate from isocitrate: step 2/2. This Cucurbita maxima (Pumpkin) protein is Malate synthase, glyoxysomal.